The sequence spans 140 residues: Ribosomal RNA large subunit methyltransferase H (140 aa).

Residues leucine 55 and glycine 87 each coordinate S-adenosyl-L-methionine.

It belongs to the RNA methyltransferase RlmH family. In terms of assembly, homodimer.

It is found in the cytoplasm. It carries out the reaction pseudouridine(1915) in 23S rRNA + S-adenosyl-L-methionine = N(3)-methylpseudouridine(1915) in 23S rRNA + S-adenosyl-L-homocysteine + H(+). Specifically methylates the pseudouridine at position 1915 (m3Psi1915) in 23S rRNA. The polypeptide is Ribosomal RNA large subunit methyltransferase H (Rhizorhabdus wittichii (strain DSM 6014 / CCUG 31198 / JCM 15750 / NBRC 105917 / EY 4224 / RW1) (Sphingomonas wittichii)).